The following is a 503-amino-acid chain: Aspartyl/glutamyl-tRNA(Asn/Gln) amidotransferase subunit B (503 aa).

It belongs to the GatB/GatE family. GatB subfamily. In terms of assembly, heterotrimer of A, B and C subunits.

It carries out the reaction L-glutamyl-tRNA(Gln) + L-glutamine + ATP + H2O = L-glutaminyl-tRNA(Gln) + L-glutamate + ADP + phosphate + H(+). The catalysed reaction is L-aspartyl-tRNA(Asn) + L-glutamine + ATP + H2O = L-asparaginyl-tRNA(Asn) + L-glutamate + ADP + phosphate + 2 H(+). Its function is as follows. Allows the formation of correctly charged Asn-tRNA(Asn) or Gln-tRNA(Gln) through the transamidation of misacylated Asp-tRNA(Asn) or Glu-tRNA(Gln) in organisms which lack either or both of asparaginyl-tRNA or glutaminyl-tRNA synthetases. The reaction takes place in the presence of glutamine and ATP through an activated phospho-Asp-tRNA(Asn) or phospho-Glu-tRNA(Gln). The polypeptide is Aspartyl/glutamyl-tRNA(Asn/Gln) amidotransferase subunit B (Rhodococcus jostii (strain RHA1)).